Consider the following 1316-residue polypeptide: DNA-directed RNA polymerase subunit beta' (1316 aa).

Zn(2+) is bound by residues cysteine 60, cysteine 62, cysteine 75, and cysteine 78. Mg(2+)-binding residues include aspartate 535, aspartate 537, and aspartate 539. Zn(2+) is bound by residues cysteine 891, cysteine 968, cysteine 975, and cysteine 978.

This sequence belongs to the RNA polymerase beta' chain family. As to quaternary structure, the RNAP catalytic core consists of 2 alpha, 1 beta, 1 beta' and 1 omega subunit. When a sigma factor is associated with the core the holoenzyme is formed, which can initiate transcription. Requires Mg(2+) as cofactor. It depends on Zn(2+) as a cofactor.

It catalyses the reaction RNA(n) + a ribonucleoside 5'-triphosphate = RNA(n+1) + diphosphate. Its function is as follows. DNA-dependent RNA polymerase catalyzes the transcription of DNA into RNA using the four ribonucleoside triphosphates as substrates. The protein is DNA-directed RNA polymerase subunit beta' of Mycobacterium ulcerans (strain Agy99).